Consider the following 299-residue polypeptide: Small ribosomal subunit biogenesis GTPase RsgA (299 aa).

The 162-residue stretch at 64 to 225 (KNEMIRPPVA…VGDTPGFSSL (162 aa)) folds into the CP-type G domain. GTP is bound by residues 113–116 (TKTD) and 168–176 (GQTGAGKST). Zn(2+)-binding residues include C249, C254, H256, and C262.

It belongs to the TRAFAC class YlqF/YawG GTPase family. RsgA subfamily. In terms of assembly, monomer. Associates with 30S ribosomal subunit, binds 16S rRNA. Zn(2+) serves as cofactor.

It localises to the cytoplasm. Its function is as follows. One of several proteins that assist in the late maturation steps of the functional core of the 30S ribosomal subunit. Helps release RbfA from mature subunits. May play a role in the assembly of ribosomal proteins into the subunit. Circularly permuted GTPase that catalyzes slow GTP hydrolysis, GTPase activity is stimulated by the 30S ribosomal subunit. The chain is Small ribosomal subunit biogenesis GTPase RsgA from Latilactobacillus sakei subsp. sakei (strain 23K) (Lactobacillus sakei subsp. sakei).